Here is a 382-residue protein sequence, read N- to C-terminus: uncharacterized protein (382 aa).

12 helical membrane-spanning segments follow: residues 8–28, 45–65, 75–95, 102–122, 131–151, 157–177, 204–224, 231–251, 270–290, 291–311, 325–345, and 349–369; these read VMLLLCGLLLLTLAIAVLNTL, MVSSSYFTGNLVGTLFTGYLI, YLASLIFAAGCVGLGVMVGFW, FIAGIGCAMIWVVVESALMCS, LLAAYMMVYYMGTFLGQLLVS, LLHVLPWVTGMILAGILPLLF, LGVNGCIISGIVLGSLYGLMP, GMANASIGFWMAVLVSAGILG, VQVFVVILGSIAMLTQAAMAP, ALFILGAAGFTLYPVAMAWAC, ALLLSYTVGSLLGPSFAAMLM, and SDNLLFIMIASVSFIYLLMLL.

The protein belongs to the major facilitator superfamily. YcaD (TC 2.A.1.26) family.

The protein localises to the cell inner membrane. This is an uncharacterized protein from Salmonella newport (strain SL254).